The chain runs to 376 residues: N-acetyldiaminopimelate deacetylase (376 aa).

Asp69 is an active-site residue. Glu128 acts as the Proton acceptor in catalysis.

The protein belongs to the peptidase M20A family. N-acetyldiaminopimelate deacetylase subfamily.

It carries out the reaction N-acetyl-(2S,6S)-2,6-diaminopimelate + H2O = (2S,6S)-2,6-diaminopimelate + acetate. It participates in amino-acid biosynthesis; L-lysine biosynthesis via DAP pathway; LL-2,6-diaminopimelate from (S)-tetrahydrodipicolinate (acetylase route): step 3/3. Catalyzes the conversion of N-acetyl-diaminopimelate to diaminopimelate and acetate. The sequence is that of N-acetyldiaminopimelate deacetylase from Bacillus cereus (strain 03BB102).